We begin with the raw amino-acid sequence, 358 residues long: GTPase Obg (358 aa).

In terms of domain architecture, Obg spans Met1–Leu159. The OBG-type G domain maps to Ala160–Glu334. Residues Gly166 to Ser173, Phe191 to Tyr195, Asp213 to Gly216, Asn284 to Asp287, and Ser315 to Leu317 each bind GTP. Positions 173 and 193 each coordinate Mg(2+). Positions Asp337–Glu358 are disordered. The segment covering Arg341–Glu358 has biased composition (basic and acidic residues).

Belongs to the TRAFAC class OBG-HflX-like GTPase superfamily. OBG GTPase family. Monomer. It depends on Mg(2+) as a cofactor.

Its subcellular location is the cytoplasm. Its function is as follows. An essential GTPase which binds GTP, GDP and possibly (p)ppGpp with moderate affinity, with high nucleotide exchange rates and a fairly low GTP hydrolysis rate. Plays a role in control of the cell cycle, stress response, ribosome biogenesis and in those bacteria that undergo differentiation, in morphogenesis control. This is GTPase Obg from Alkalilimnicola ehrlichii (strain ATCC BAA-1101 / DSM 17681 / MLHE-1).